The primary structure comprises 107 residues: Ferredoxin (107 aa).

4Fe-4S ferredoxin-type domains follow at residues threonine 2 to glutamate 30 and phenylalanine 31 to proline 60. The [3Fe-4S] cluster site is built by cysteine 9 and cysteine 17. [4Fe-4S] cluster contacts are provided by cysteine 21, cysteine 40, cysteine 43, and cysteine 46. Cysteine 50 contributes to the [3Fe-4S] cluster binding site.

It depends on [4Fe-4S] cluster as a cofactor. Requires [3Fe-4S] cluster as cofactor.

Ferredoxins are iron-sulfur proteins that transfer electrons in a wide variety of metabolic reactions. This is Ferredoxin (fdxA) from Rickettsia bellii (strain RML369-C).